The following is a 412-amino-acid chain: Alanyl-tRNA editing protein Aarsd1 (412 aa).

Zn(2+) is bound by residues His-109 and His-113. Phosphoserine is present on Ser-174. The Zn(2+) site is built by Cys-209 and His-213.

The protein belongs to the class-II aminoacyl-tRNA synthetase family. Alax-L subfamily. Zn(2+) is required as a cofactor.

It localises to the cytoplasm. Its function is as follows. Functions in trans to edit the amino acid moiety from incorrectly charged Ser-tRNA(Ala). The protein is Alanyl-tRNA editing protein Aarsd1 (Aarsd1) of Mus musculus (Mouse).